The chain runs to 127 residues: Fluoride-specific ion channel FluC (127 aa).

Transmembrane regions (helical) follow at residues 4–24 (WFWI…LSTW) and 36–56 (GTLA…EIAA). 2 residues coordinate Na(+): Gly-75 and Thr-78. The helical transmembrane segment at 100–120 (LANIAITLVVCLLAGVLGMVV) threads the bilayer.

Belongs to the fluoride channel Fluc/FEX (TC 1.A.43) family.

It localises to the cell inner membrane. The enzyme catalyses fluoride(in) = fluoride(out). Na(+) is not transported, but it plays an essential structural role and its presence is essential for fluoride channel function. Fluoride-specific ion channel. Important for reducing fluoride concentration in the cell, thus reducing its toxicity. The polypeptide is Fluoride-specific ion channel FluC (Sorangium cellulosum (strain So ce56) (Polyangium cellulosum (strain So ce56))).